We begin with the raw amino-acid sequence, 275 residues long: Type III pantothenate kinase (275 aa).

Residue 6–13 (DAGNTNIV) coordinates ATP. Residue 108–111 (GADR) coordinates substrate. The active-site Proton acceptor is the D110. D130 contributes to the K(+) binding site. An ATP-binding site is contributed by T133. Residue T187 coordinates substrate.

The protein belongs to the type III pantothenate kinase family. Homodimer. NH4(+) is required as a cofactor. Requires K(+) as cofactor.

It is found in the cytoplasm. It carries out the reaction (R)-pantothenate + ATP = (R)-4'-phosphopantothenate + ADP + H(+). The protein operates within cofactor biosynthesis; coenzyme A biosynthesis; CoA from (R)-pantothenate: step 1/5. Its function is as follows. Catalyzes the phosphorylation of pantothenate (Pan), the first step in CoA biosynthesis. The protein is Type III pantothenate kinase of Zymomonas mobilis subsp. mobilis (strain ATCC 31821 / ZM4 / CP4).